Here is a 490-residue protein sequence, read N- to C-terminus: Betaine aldehyde dehydrogenase (490 aa).

Residues Thr26, Ile27, and Asp93 each coordinate K(+). 150–152 lines the NAD(+) pocket; it reads GAW. The Charge relay system role is filled by Lys162. An NAD(+)-binding site is contributed by 176–179; that stretch reads KPSE. Residue Val180 participates in K(+) binding. An NAD(+)-binding site is contributed by 230 to 233; it reads GVAS. Leu246 is a K(+) binding site. Glu252 functions as the Proton acceptor in the catalytic mechanism. Gly254, Cys286, and Glu387 together coordinate NAD(+). Cys286 functions as the Nucleophile in the catalytic mechanism. Cys286 carries the post-translational modification Cysteine sulfenic acid (-SOH). 2 residues coordinate K(+): Lys457 and Gly460. The active-site Charge relay system is the Glu464.

It belongs to the aldehyde dehydrogenase family. Dimer of dimers. K(+) serves as cofactor.

The catalysed reaction is betaine aldehyde + NAD(+) + H2O = glycine betaine + NADH + 2 H(+). Its pathway is amine and polyamine biosynthesis; betaine biosynthesis via choline pathway; betaine from betaine aldehyde: step 1/1. In terms of biological role, involved in the biosynthesis of the osmoprotectant glycine betaine. Catalyzes the irreversible oxidation of betaine aldehyde to the corresponding acid. The chain is Betaine aldehyde dehydrogenase from Shigella flexneri serotype 5b (strain 8401).